Consider the following 308-residue polypeptide: Probable dimethyladenosine transferase (308 aa).

Positions 1 to 11 (MGKTSKVKKTK) are enriched in basic residues. The segment at 1-24 (MGKTSKVKKTKAGSSTGNVQSLPF) is disordered. Polar residues predominate over residues 12 to 24 (AGSSTGNVQSLPF). Residues histidine 31, leucine 33, glycine 58, glutamate 79, aspartate 107, and asparagine 122 each contribute to the S-adenosyl-L-methionine site.

Belongs to the class I-like SAM-binding methyltransferase superfamily. rRNA adenine N(6)-methyltransferase family. In terms of assembly, part of the small subunit (SSU) processome, composed of more than 70 proteins and the RNA chaperone small nucleolar RNA (snoRNA) U3.

The protein resides in the nucleus. The protein localises to the nucleolus. The enzyme catalyses adenosine(1779)/adenosine(1780) in 18S rRNA + 4 S-adenosyl-L-methionine = N(6)-dimethyladenosine(1779)/N(6)-dimethyladenosine(1780) in 18S rRNA + 4 S-adenosyl-L-homocysteine + 4 H(+). Functionally, specifically dimethylates two adjacent adenosines in the loop of a conserved hairpin near the 3'-end of 18S rRNA in the 40S particle. Involved in the pre-rRNA processing steps leading to small-subunit rRNA production independently of its RNA-modifying catalytic activity. Part of the small subunit (SSU) processome, first precursor of the small eukaryotic ribosomal subunit. During the assembly of the SSU processome in the nucleolus, many ribosome biogenesis factors, an RNA chaperone and ribosomal proteins associate with the nascent pre-rRNA and work in concert to generate RNA folding, modifications, rearrangements and cleavage as well as targeted degradation of pre-ribosomal RNA by the RNA exosome. This chain is Probable dimethyladenosine transferase, found in Caenorhabditis elegans.